Reading from the N-terminus, the 320-residue chain is Agamous-like MADS-box protein AGL90 (320 aa).

The MADS-box domain maps to 1–59 (MKKVKLSLIANERSRKTSFMKRKNGIFKKLHELSTLCGVQACALIYSPFIPVPESWPSR). A coiled-coil region spans residues 80–115 (KMMDQETHLMERITKAKEQLKNLAAENRELQVRRFM).

Interacts with AGL62.

It localises to the nucleus. Probable transcription factor. This chain is Agamous-like MADS-box protein AGL90 (AGL90), found in Arabidopsis thaliana (Mouse-ear cress).